A 2346-amino-acid polypeptide reads, in one-letter code: Acetyl-CoA carboxylase 1 (2346 aa).

Position 1 is an N-acetylmethionine (Met1). Residues Ser5, Ser23, Ser25, Ser29, Ser34, Ser48, Ser50, and Ser53 each carry the phosphoserine modification. The residue at position 58 (Thr58) is a Phosphothreonine. The residue at position 78 (Ser78) is a Phosphoserine. Ser80 is modified (phosphoserine; by AMPK). The region spanning 117–618 is the Biotin carboxylation domain; it reads VIEKVLIANN…DTGWLDRLIA (502 aa). Positions 275-466 constitute an ATP-grasp domain; the sequence is SKRILNVPQE…LPAAQLQIAM (192 aa). Residue 315–320 coordinates ATP; that stretch reads GGGGKG. Mg(2+)-binding residues include Glu424, Glu437, and Asn439. 3 residues coordinate Mn(2+): Glu424, Glu437, and Asn439. Arg441 is an active-site residue. Thr610 is subject to Phosphothreonine. The Biotinyl-binding domain maps to 745–819; sequence FEKENDPSVL…DPGCVIAKMQ (75 aa). Lys786 bears the N6-biotinyllysine mark. A phosphoserine mark is found at Ser835, Ser1201, Ser1216, and Ser1218. Thr1227 bears the Phosphothreonine mark. 3 positions are modified to phosphoserine: Ser1259, Ser1263, and Ser1273. Lys1334 carries the N6-acetyllysine modification. Residues 1576–1914 enclose the CoA carboxyltransferase N-terminal domain; that stretch reads PYVTKDLLQS…SVYSSVPLLN (339 aa). The tract at residues 1576-2234 is carboxyltransferase; it reads PYVTKDLLQS…EDLVKKKIHN (659 aa). The CoA site is built by Arg1823, Lys2127, and Arg2129. In terms of domain architecture, CoA carboxyltransferase C-terminal spans 1918–2234; the sequence is PIDRVIEFVP…EDLVKKKIHN (317 aa). Thr2153 is subject to Phosphothreonine.

As to quaternary structure, monomer, homodimer, and homotetramer. Can form filamentous polymers. Interacts in its inactive phosphorylated form with the BRCT domains of BRCA1 which prevents ACACA dephosphorylation and inhibits lipid synthesis. Interacts with MID1IP1; interaction with MID1IP1 promotes oligomerization and increases its activity. It depends on Mg(2+) as a cofactor. Mn(2+) serves as cofactor. Biotin is required as a cofactor. In terms of processing, phosphorylation on Ser-1263 is required for interaction with BRCA1. Phosphorylation at Ser-80 by AMPK inactivates enzyme activity. Post-translationally, the biotin cofactor is covalently attached to the central biotinyl-binding domain and is required for the catalytic activity. In terms of tissue distribution, expressed at high levels in mammary gland.

It is found in the cytoplasm. The protein localises to the cytosol. It carries out the reaction hydrogencarbonate + acetyl-CoA + ATP = malonyl-CoA + ADP + phosphate + H(+). It participates in lipid metabolism; malonyl-CoA biosynthesis; malonyl-CoA from acetyl-CoA: step 1/1. Inhibited by phosphorylation. Citrate promotes oligomerization of the protein into filaments that correspond to the most active form of the carboxylase. Cytosolic enzyme that catalyzes the carboxylation of acetyl-CoA to malonyl-CoA, the first and rate-limiting step of de novo fatty acid biosynthesis. This is a 2 steps reaction starting with the ATP-dependent carboxylation of the biotin carried by the biotin carboxyl carrier (BCC) domain followed by the transfer of the carboxyl group from carboxylated biotin to acetyl-CoA. This Ovis aries (Sheep) protein is Acetyl-CoA carboxylase 1.